The following is a 280-amino-acid chain: Band 7 protein AGAP004871 (280 aa).

Residues 23-43 (ILIFLSWVLVVLTMPFSLLVC) traverse the membrane as a helical segment.

The protein belongs to the band 7/mec-2 family.

It is found in the membrane. The sequence is that of Band 7 protein AGAP004871 from Anopheles gambiae (African malaria mosquito).